Reading from the N-terminus, the 342-residue chain is N-acetyl-gamma-glutamyl-phosphate reductase (342 aa).

The active site involves C149.

This sequence belongs to the NAGSA dehydrogenase family. Type 1 subfamily.

It is found in the cytoplasm. It carries out the reaction N-acetyl-L-glutamate 5-semialdehyde + phosphate + NADP(+) = N-acetyl-L-glutamyl 5-phosphate + NADPH + H(+). It functions in the pathway amino-acid biosynthesis; L-arginine biosynthesis; N(2)-acetyl-L-ornithine from L-glutamate: step 3/4. In terms of biological role, catalyzes the NADPH-dependent reduction of N-acetyl-5-glutamyl phosphate to yield N-acetyl-L-glutamate 5-semialdehyde. This chain is N-acetyl-gamma-glutamyl-phosphate reductase, found in Nitrosomonas europaea (strain ATCC 19718 / CIP 103999 / KCTC 2705 / NBRC 14298).